The primary structure comprises 80 residues: MKYPLMPLVNDLTFSFLVFWFCLPVGLLLLLIIWLRFLLSQDSEENDSSVCLDWEPWSKGPAEFCWKGTLHGQEKERPCW.

A helical membrane pass occupies residues 14–34 (FSFLVFWFCLPVGLLLLLIIW).

This sequence belongs to the adipogenin family.

Its subcellular location is the membrane. It is found in the nucleus. Plays a role in stimulating adipocyte differentiation and development. In Homo sapiens (Human), this protein is Adipogenin.